The primary structure comprises 670 residues: DNA ligase (670 aa).

NAD(+) contacts are provided by residues 32 to 36 (DSEYD), 81 to 82 (SL), and Glu114. Lys116 (N6-AMP-lysine intermediate) is an active-site residue. 4 residues coordinate NAD(+): Arg137, Glu174, Lys291, and Lys315. Zn(2+)-binding residues include Cys409, Cys412, Cys427, and Cys433. Residues 592–670 (ASENLFKDKT…EEEFLAQITR (79 aa)) enclose the BRCT domain.

This sequence belongs to the NAD-dependent DNA ligase family. LigA subfamily. Mg(2+) is required as a cofactor. Requires Mn(2+) as cofactor.

The enzyme catalyses NAD(+) + (deoxyribonucleotide)n-3'-hydroxyl + 5'-phospho-(deoxyribonucleotide)m = (deoxyribonucleotide)n+m + AMP + beta-nicotinamide D-nucleotide.. In terms of biological role, DNA ligase that catalyzes the formation of phosphodiester linkages between 5'-phosphoryl and 3'-hydroxyl groups in double-stranded DNA using NAD as a coenzyme and as the energy source for the reaction. It is essential for DNA replication and repair of damaged DNA. The polypeptide is DNA ligase (Haemophilus influenzae (strain PittGG)).